Consider the following 155-residue polypeptide: uncharacterized protein (155 aa).

Disordered regions lie at residues 1-22 (MSSQ…TFTF) and 110-155 (NKEP…DTQA). At S2 the chain carries N-acetylserine. Phosphoserine is present on residues S136, S144, and S146. The segment covering 136 to 155 (SDEDLDAESDSDGEDGDTQA) has biased composition (acidic residues).

This is an uncharacterized protein from Mus musculus (Mouse).